The chain runs to 432 residues: Protein prenyltransferase alpha subunit repeat-containing protein 1-A (432 aa).

PFTA repeat units lie at residues Glu86–Pro119, Lys121–Leu154, Glu179–Lys212, Asp218–Thr251, Glu294–Leu327, and Ser395–His432.

This sequence belongs to the protein prenyltransferase subunit alpha family.

The polypeptide is Protein prenyltransferase alpha subunit repeat-containing protein 1-A (ptar1-a) (Xenopus laevis (African clawed frog)).